The chain runs to 184 residues: MAPLLPIRTLPLILILLALLSPGAADFNISSLSGLLSPALTESLLVALPPCHLTGGNATLMVRRANDSKVVTSSFVVPPCRGRRELVSVVDSGAGFTVTRLSAYQVTNLVPGTKFYISYLVKKGTATESSREIPMSTLPRRNMESIGLGMARTGGMVVITVLLSVAMFLLVLGFIIALALGSRK.

The first 25 residues, 1–25 (MAPLLPIRTLPLILILLALLSPGAA), serve as a signal peptide directing secretion. A propeptide spanning residues 26 to 84 (DFNISSLSGLLSPALTESLLVALPPCHLTGGNATLMVRRANDSKVVTSSFVVPPCRGRR) is cleaved from the precursor. N28, N57, and N66 each carry an N-linked (GlcNAc...) asparagine glycan. The Lumenal segment spans residues 85 to 155 (ELVSVVDSGA…IGLGMARTGG (71 aa)). The chain crosses the membrane as a helical span at residues 156–176 (MVVITVLLSVAMFLLVLGFII). Residues 177 to 184 (ALALGSRK) lie on the Cytoplasmic side of the membrane.

The protein belongs to the uroplakin-2 family. As to quaternary structure, interacts with uroplakin-1a (UPK1A). In terms of tissue distribution, expressed in ureter.

Its subcellular location is the cell membrane. Functionally, component of the asymmetric unit membrane (AUM); a highly specialized biomembrane elaborated by terminally differentiated urothelial cells. May play an important role in regulating the assembly of the AUM. In Homo sapiens (Human), this protein is Uroplakin-2 (UPK2).